Consider the following 292-residue polypeptide: MAISASLVKQLRERTGSGMMECKKALVETDGDLDAAVELMRKKGLAKADKKSGRIAAEGIIAAKRSEDGHSGVLVEINSETDFVAKSDDFLAFADGVARLALEEKPEDLEALMACELNGQDLATATKELVAKIGENIQVRRFVRYGSSGNTVAQYLHGSRIGVMVELEGGDEQLARDVAMHVAASKPECVSEDDMPAEVIEKEKAILVEQARESGKPEEIIEKMVQGRLKKFINEQTLVGQPFVKDPDQTVGELLKGAGAKVARFVRYEVGEGKEKKEENFAEEVMAQARGS.

The segment at 81–84 is involved in Mg(2+) ion dislocation from EF-Tu; that stretch reads TDFV.

This sequence belongs to the EF-Ts family.

Its subcellular location is the cytoplasm. Associates with the EF-Tu.GDP complex and induces the exchange of GDP to GTP. It remains bound to the aminoacyl-tRNA.EF-Tu.GTP complex up to the GTP hydrolysis stage on the ribosome. This Alkalilimnicola ehrlichii (strain ATCC BAA-1101 / DSM 17681 / MLHE-1) protein is Elongation factor Ts.